A 263-amino-acid chain; its full sequence is S-adenosylmethionine decarboxylase proenzyme (263 aa).

Serine 113 (schiff-base intermediate with substrate; via pyruvic acid) is an active-site residue. Serine 113 is subject to Pyruvic acid (Ser); by autocatalysis. Residue histidine 118 is the Proton acceptor; for processing activity of the active site. The active-site Proton donor; for catalytic activity is the cysteine 141.

This sequence belongs to the prokaryotic AdoMetDC family. Type 2 subfamily. Heterooctamer of four alpha and four beta chains arranged as a tetramer of alpha/beta heterodimers. Requires pyruvate as cofactor. Post-translationally, is synthesized initially as an inactive proenzyme. Formation of the active enzyme involves a self-maturation process in which the active site pyruvoyl group is generated from an internal serine residue via an autocatalytic post-translational modification. Two non-identical subunits are generated from the proenzyme in this reaction, and the pyruvate is formed at the N-terminus of the alpha chain, which is derived from the carboxyl end of the proenzyme. The post-translation cleavage follows an unusual pathway, termed non-hydrolytic serinolysis, in which the side chain hydroxyl group of the serine supplies its oxygen atom to form the C-terminus of the beta chain, while the remainder of the serine residue undergoes an oxidative deamination to produce ammonia and the pyruvoyl group blocking the N-terminus of the alpha chain.

It carries out the reaction S-adenosyl-L-methionine + H(+) = S-adenosyl 3-(methylsulfanyl)propylamine + CO2. It functions in the pathway amine and polyamine biosynthesis; S-adenosylmethioninamine biosynthesis; S-adenosylmethioninamine from S-adenosyl-L-methionine: step 1/1. Functionally, catalyzes the decarboxylation of S-adenosylmethionine to S-adenosylmethioninamine (dcAdoMet), the propylamine donor required for the synthesis of the polyamines spermine and spermidine from the diamine putrescine. This is S-adenosylmethionine decarboxylase proenzyme from Marinobacter nauticus (strain ATCC 700491 / DSM 11845 / VT8) (Marinobacter aquaeolei).